A 47-amino-acid polypeptide reads, in one-letter code: Large ribosomal subunit protein bL34 (47 aa).

Residues 1–47 (MVTEGLKPHISIKKKKRKSGFLARMRTKSGRKIIARRRRKGRKRLAP) are disordered. Over residues 10–47 (ISIKKKKRKSGFLARMRTKSGRKIIARRRRKGRKRLAP) the composition is skewed to basic residues.

This sequence belongs to the bacterial ribosomal protein bL34 family.

In Aquifex aeolicus (strain VF5), this protein is Large ribosomal subunit protein bL34 (rpmH).